Reading from the N-terminus, the 212-residue chain is Small ribosomal subunit protein uS19m (212 aa).

The N-terminal 29 residues, Met1–Met29, are a transit peptide targeting the mitochondrion. The RRM domain occupies Thr31–Asp109.

The protein belongs to the universal ribosomal protein uS19 family. As to quaternary structure, component of the mitochondrial ribosome small subunit.

Its subcellular location is the mitochondrion. Functionally, the RNA-binding domain found in RPS19 may functionally replace the missing mitochondrial RPS13. This is Small ribosomal subunit protein uS19m (RPS19) from Arabidopsis thaliana (Mouse-ear cress).